A 318-amino-acid chain; its full sequence is Aspartate carbamoyltransferase catalytic subunit (318 aa).

2 residues coordinate carbamoyl phosphate: Arg-59 and Thr-60. Lys-87 serves as a coordination point for L-aspartate. Carbamoyl phosphate-binding residues include Arg-109, His-137, and Gln-140. L-aspartate-binding residues include Arg-170 and Arg-224. Carbamoyl phosphate is bound by residues Gly-265 and Pro-266.

Belongs to the aspartate/ornithine carbamoyltransferase superfamily. ATCase family. As to quaternary structure, heterododecamer (2C3:3R2) of six catalytic PyrB chains organized as two trimers (C3), and six regulatory PyrI chains organized as three dimers (R2).

It catalyses the reaction carbamoyl phosphate + L-aspartate = N-carbamoyl-L-aspartate + phosphate + H(+). It functions in the pathway pyrimidine metabolism; UMP biosynthesis via de novo pathway; (S)-dihydroorotate from bicarbonate: step 2/3. Its function is as follows. Catalyzes the condensation of carbamoyl phosphate and aspartate to form carbamoyl aspartate and inorganic phosphate, the committed step in the de novo pyrimidine nucleotide biosynthesis pathway. The polypeptide is Aspartate carbamoyltransferase catalytic subunit (Rhizobium etli (strain ATCC 51251 / DSM 11541 / JCM 21823 / NBRC 15573 / CFN 42)).